A 347-amino-acid polypeptide reads, in one-letter code: GMP reductase (347 aa).

Residue 108 to 131 (ADFDKMKQILALSPSLKFICIDVA) coordinates NADP(+). K(+) is bound by residues Gly-181 and Gly-183. The active-site Thioimidate intermediate is Cys-186. 216-239 (IVSDGGCSVPGDVAKAFGGGADFV) serves as a coordination point for NADP(+).

The protein belongs to the IMPDH/GMPR family. GuaC type 1 subfamily. As to quaternary structure, homotetramer.

It carries out the reaction IMP + NH4(+) + NADP(+) = GMP + NADPH + 2 H(+). In terms of biological role, catalyzes the irreversible NADPH-dependent deamination of GMP to IMP. It functions in the conversion of nucleobase, nucleoside and nucleotide derivatives of G to A nucleotides, and in maintaining the intracellular balance of A and G nucleotides. In Yersinia pestis bv. Antiqua (strain Antiqua), this protein is GMP reductase.